We begin with the raw amino-acid sequence, 437 residues long: Anhydromevalonate phosphate decarboxylase (437 aa).

Asn136 and Glu199 together coordinate Mn(2+). Asp247 (proton acceptor) is an active-site residue.

This sequence belongs to the UbiD family. The cofactor is prenylated FMN. Mn(2+) serves as cofactor.

It carries out the reaction (2E)-3-methyl-5-phosphooxypent-2-enoate + H(+) = isopentenyl phosphate + CO2. Its pathway is isoprenoid biosynthesis; isopentenyl diphosphate biosynthesis via mevalonate pathway. Its function is as follows. Catalyzes the conversion of trans-anhydromevalonate 5-phosphate (tAHMP) into isopentenyl phosphate. Involved in the archaeal mevalonate (MVA) pathway, which provides fundamental precursors for isoprenoid biosynthesis, such as isopentenyl diphosphate (IPP) and dimethylallyl diphosphate (DMAPP). The protein is Anhydromevalonate phosphate decarboxylase of Aeropyrum pernix (strain ATCC 700893 / DSM 11879 / JCM 9820 / NBRC 100138 / K1).